Consider the following 109-residue polypeptide: Flagellar hook-basal body complex protein FliE (109 aa).

The protein belongs to the FliE family.

The protein resides in the bacterial flagellum basal body. The protein is Flagellar hook-basal body complex protein FliE of Pseudomonas paraeruginosa (strain DSM 24068 / PA7) (Pseudomonas aeruginosa (strain PA7)).